Consider the following 225-residue polypeptide: UPF0173 metal-dependent hydrolase Pisl_0803 (225 aa).

It belongs to the UPF0173 family.

In Pyrobaculum islandicum (strain DSM 4184 / JCM 9189 / GEO3), this protein is UPF0173 metal-dependent hydrolase Pisl_0803.